The chain runs to 172 residues: Disulfide bond formation protein B (172 aa).

Over 1–11 (MNPFRWSFRAQ) the chain is Cytoplasmic. A helical membrane pass occupies residues 12 to 28 (FLLGFLACAGLLAYAIY). At 29-46 (VQLHLGLEPCPLCIFQRI) the chain is on the periplasmic side. A disulfide bridge connects residues cysteine 38 and cysteine 41. Residues 47 to 63 (AFAALAMFFLLGALHGP) traverse the membrane as a helical segment. Residues 64 to 70 (RAAAGRK) lie on the Cytoplasmic side of the membrane. Residues 71–88 (VYGVLSFIAAGVGMGIAA) traverse the membrane as a helical segment. The Periplasmic segment spans residues 89–145 (RHVWVQIRPKDMMSSCGPPLSFLSETMGPFEVFRTVLTGTGDCGNIDWRFLGLSMPM). A disulfide bridge connects residues cysteine 104 and cysteine 131. The helical transmembrane segment at 146–164 (WSMVWFVGLALWALYAGFK) threads the bilayer. Residues 165–172 (ARRSSVHH) are Cytoplasmic-facing.

The protein belongs to the DsbB family.

It localises to the cell inner membrane. In terms of biological role, required for disulfide bond formation in some periplasmic proteins. Acts by oxidizing the DsbA protein. This Xanthomonas euvesicatoria pv. vesicatoria (strain 85-10) (Xanthomonas campestris pv. vesicatoria) protein is Disulfide bond formation protein B.